The primary structure comprises 536 residues: Phosphoenolpyruvate carboxykinase (ATP) (536 aa).

Residues R61, Y195, and K201 each contribute to the substrate site. ATP is bound by residues K201, H220, and 236–244; that span reads GLSGTGKTT. Mn(2+) contacts are provided by K201 and H220. D257 lines the Mn(2+) pocket. ATP-binding residues include E285, R322, and T447. Residue R322 participates in substrate binding.

This sequence belongs to the phosphoenolpyruvate carboxykinase (ATP) family. Mn(2+) is required as a cofactor.

It localises to the cytoplasm. It catalyses the reaction oxaloacetate + ATP = phosphoenolpyruvate + ADP + CO2. It participates in carbohydrate biosynthesis; gluconeogenesis. Its function is as follows. Involved in the gluconeogenesis. Catalyzes the conversion of oxaloacetate (OAA) to phosphoenolpyruvate (PEP) through direct phosphoryl transfer between the nucleoside triphosphate and OAA. This chain is Phosphoenolpyruvate carboxykinase (ATP), found in Brucella suis biovar 1 (strain 1330).